The primary structure comprises 34 residues: Tryptophanase operon leader peptide (34 aa).

The protein is Tryptophanase operon leader peptide (tnaL) of Proteus vulgaris.